The chain runs to 134 residues: Phosphoribosyl-AMP cyclohydrolase (134 aa).

Asp-80 lines the Mg(2+) pocket. Cys-81 contacts Zn(2+). Mg(2+)-binding residues include Asp-82 and Asp-84. Zn(2+) contacts are provided by Cys-98 and Cys-105.

Belongs to the PRA-CH family. In terms of assembly, homodimer. The cofactor is Mg(2+). Zn(2+) serves as cofactor.

It is found in the cytoplasm. It catalyses the reaction 1-(5-phospho-beta-D-ribosyl)-5'-AMP + H2O = 1-(5-phospho-beta-D-ribosyl)-5-[(5-phospho-beta-D-ribosylamino)methylideneamino]imidazole-4-carboxamide. Its pathway is amino-acid biosynthesis; L-histidine biosynthesis; L-histidine from 5-phospho-alpha-D-ribose 1-diphosphate: step 3/9. Catalyzes the hydrolysis of the adenine ring of phosphoribosyl-AMP. The chain is Phosphoribosyl-AMP cyclohydrolase from Bordetella bronchiseptica (strain ATCC BAA-588 / NCTC 13252 / RB50) (Alcaligenes bronchisepticus).